A 456-amino-acid chain; its full sequence is Esterase MT1326 (456 aa).

LysM domains follow at residues 3 to 50 (STHA…RLIM), 54 to 101 (TRYT…RLIM), and 105 to 152 (TRYT…VLVI). Catalysis depends on residues serine 294, aspartate 391, and histidine 425.

It belongs to the AB hydrolase superfamily.

It localises to the secreted. The protein resides in the cell wall. The enzyme catalyses a fatty acid ester + H2O = an aliphatic alcohol + a fatty acid + H(+). Exhibits lipolytic activity with medium chain length esters as optimum substrates. This Mycobacterium tuberculosis (strain CDC 1551 / Oshkosh) protein is Esterase MT1326.